The chain runs to 131 residues: Universal stress protein C (131 aa).

The protein belongs to the universal stress protein A family.

The protein localises to the cytoplasm. In terms of biological role, required for resistance to DNA-damaging agents. The polypeptide is Universal stress protein C (uspC) (Salmonella typhi).